Reading from the N-terminus, the 213-residue chain is Probable transaldolase (213 aa).

Lysine 83 (schiff-base intermediate with substrate) is an active-site residue.

This sequence belongs to the transaldolase family. Type 3B subfamily.

Its subcellular location is the cytoplasm. The enzyme catalyses D-sedoheptulose 7-phosphate + D-glyceraldehyde 3-phosphate = D-erythrose 4-phosphate + beta-D-fructose 6-phosphate. Its pathway is carbohydrate degradation; pentose phosphate pathway; D-glyceraldehyde 3-phosphate and beta-D-fructose 6-phosphate from D-ribose 5-phosphate and D-xylulose 5-phosphate (non-oxidative stage): step 2/3. Functionally, transaldolase is important for the balance of metabolites in the pentose-phosphate pathway. The protein is Probable transaldolase of Syntrophomonas wolfei subsp. wolfei (strain DSM 2245B / Goettingen).